We begin with the raw amino-acid sequence, 367 residues long: Queuine tRNA-ribosyltransferase (367 aa).

D89 (proton acceptor) is an active-site residue. Substrate-binding positions include 89-93, D143, Q185, and G212; that span reads DSGGF. The interval 243–249 is RNA binding; that stretch reads GVGTPSD. Catalysis depends on D262, which acts as the Nucleophile. The tract at residues 267–271 is RNA binding; important for wobble base 34 recognition; the sequence is TRNAR. Positions 300, 302, 305, and 331 each coordinate Zn(2+).

This sequence belongs to the queuine tRNA-ribosyltransferase family. Homodimer. Within each dimer, one monomer is responsible for RNA recognition and catalysis, while the other monomer binds to the replacement base PreQ1. Requires Zn(2+) as cofactor.

The enzyme catalyses 7-aminomethyl-7-carbaguanine + guanosine(34) in tRNA = 7-aminomethyl-7-carbaguanosine(34) in tRNA + guanine. It functions in the pathway tRNA modification; tRNA-queuosine biosynthesis. In terms of biological role, catalyzes the base-exchange of a guanine (G) residue with the queuine precursor 7-aminomethyl-7-deazaguanine (PreQ1) at position 34 (anticodon wobble position) in tRNAs with GU(N) anticodons (tRNA-Asp, -Asn, -His and -Tyr). Catalysis occurs through a double-displacement mechanism. The nucleophile active site attacks the C1' of nucleotide 34 to detach the guanine base from the RNA, forming a covalent enzyme-RNA intermediate. The proton acceptor active site deprotonates the incoming PreQ1, allowing a nucleophilic attack on the C1' of the ribose to form the product. After dissociation, two additional enzymatic reactions on the tRNA convert PreQ1 to queuine (Q), resulting in the hypermodified nucleoside queuosine (7-(((4,5-cis-dihydroxy-2-cyclopenten-1-yl)amino)methyl)-7-deazaguanosine). This chain is Queuine tRNA-ribosyltransferase, found in Thiobacillus denitrificans (strain ATCC 25259 / T1).